The primary structure comprises 467 residues: 3-isopropylmalate dehydratase large subunit (467 aa).

[4Fe-4S] cluster contacts are provided by C349, C408, and C411.

It belongs to the aconitase/IPM isomerase family. LeuC type 1 subfamily. Heterodimer of LeuC and LeuD. The cofactor is [4Fe-4S] cluster.

The catalysed reaction is (2R,3S)-3-isopropylmalate = (2S)-2-isopropylmalate. It participates in amino-acid biosynthesis; L-leucine biosynthesis; L-leucine from 3-methyl-2-oxobutanoate: step 2/4. Functionally, catalyzes the isomerization between 2-isopropylmalate and 3-isopropylmalate, via the formation of 2-isopropylmaleate. In Dinoroseobacter shibae (strain DSM 16493 / NCIMB 14021 / DFL 12), this protein is 3-isopropylmalate dehydratase large subunit.